Consider the following 355-residue polypeptide: MHNPLSILLRPAALGYRVIVQLRNTLFDRQLLPAWKSPVPIVSIGNLSVGGTGKTPLVDWVVKYYLSIGCKPAIISRGYRRESKGVQLVSDGQKVLLSSSESGDETAMLAWNNPDAIVIVAKKRKEAVKYLVKHFAARMPSVIILDDAFQHRQIQRELNIAIINVSEPFLKARMLPEGRMREPLKNLSRADLIVLNKIDDPEKADAIVRKIKERGTPLIKARVAIAELVCFSGAFISSEEAPPLTSISALAFAGISSPQSFLDSLGKEGVTIAAHRFFYDHEPYSAKKLTEIFREAESKGLSLITTEKDYFRMLGHPELIRIITARPCYYLKIKTDIFEGKEILQSMLRKAVAMK.

48–55 (SVGGTGKT) serves as a coordination point for ATP.

It belongs to the LpxK family.

The enzyme catalyses a lipid A disaccharide + ATP = a lipid IVA + ADP + H(+). Its pathway is glycolipid biosynthesis; lipid IV(A) biosynthesis; lipid IV(A) from (3R)-3-hydroxytetradecanoyl-[acyl-carrier-protein] and UDP-N-acetyl-alpha-D-glucosamine: step 6/6. In terms of biological role, transfers the gamma-phosphate of ATP to the 4'-position of a tetraacyldisaccharide 1-phosphate intermediate (termed DS-1-P) to form tetraacyldisaccharide 1,4'-bis-phosphate (lipid IVA). The polypeptide is Tetraacyldisaccharide 4'-kinase (Pelodictyon phaeoclathratiforme (strain DSM 5477 / BU-1)).